The following is a 278-amino-acid chain: Phosphonates import ATP-binding protein PhnC 2 (278 aa).

Residues isoleucine 5 to glycine 253 enclose the ABC transporter domain. Position 37-44 (glycine 37–serine 44) interacts with ATP.

The protein belongs to the ABC transporter superfamily. Phosphonates importer (TC 3.A.1.9.1) family. As to quaternary structure, the complex is composed of two ATP-binding proteins (PhnC), two transmembrane proteins (PhnE) and a solute-binding protein (PhnD).

The protein resides in the cell inner membrane. The catalysed reaction is phosphonate(out) + ATP + H2O = phosphonate(in) + ADP + phosphate + H(+). Its function is as follows. Part of the ABC transporter complex PhnCDE involved in phosphonates import. Responsible for energy coupling to the transport system. The polypeptide is Phosphonates import ATP-binding protein PhnC 2 (Pseudomonas aeruginosa (strain ATCC 15692 / DSM 22644 / CIP 104116 / JCM 14847 / LMG 12228 / 1C / PRS 101 / PAO1)).